The following is a 256-amino-acid chain: Major prion protein (256 aa).

A signal peptide spans 1-24 (MVKSHIGSWILVLFVAMWSDVGLC). The tract at residues 25–233 (KKRPKPGGGW…ESQAYYQRGA (209 aa)) is interaction with GRB2, ERI3 and SYN1. The segment at 28–110 (PKPGGGWNTG…QWNKPSKPKT (83 aa)) is disordered. A run of 5 repeats spans residues 54–62 (PQGGGGWGQ), 63–70 (PHGGGWGQ), 71–78 (PHGGGWGQ), 79–86 (PHGGGWGQ), and 87–95 (PHGGGGWGQ). A 5 X 8 AA tandem repeats of P-H-G-G-G-W-G-Q region spans residues 54 to 95 (PQGGGGWGQPHGGGWGQPHGGGWGQPHGGGWGQPHGGGGWGQ). Gly residues predominate over residues 55–97 (QGGGGWGQPHGGGWGQPHGGGWGQPHGGGWGQPHGGGGWGQGG). Cu(2+)-binding residues include H64, G65, G66, H72, G73, G74, H80, G81, G82, H88, G90, and G91. C182 and C217 are joined by a disulfide. N184 and N200 each carry an N-linked (GlcNAc...) (complex) asparagine glycan. A233 carries the GPI-anchor amidated alanine lipid modification. The propeptide at 234–256 (SVILFSSPPVILLISFLIFLIVG) is removed in mature form.

The protein belongs to the prion family. As to quaternary structure, monomer and homodimer. Has a tendency to aggregate into amyloid fibrils containing a cross-beta spine, formed by a steric zipper of superposed beta-strands. Soluble oligomers may represent an intermediate stage on the path to fibril formation. Copper binding may promote oligomerization. Interacts with GRB2, APP, ERI3/PRNPIP and SYN1. Mislocalized cytosolically exposed PrP interacts with MGRN1; this interaction alters MGRN1 subcellular location and causes lysosomal enlargement. Interacts with KIAA1191.

The protein localises to the cell membrane. It is found in the golgi apparatus. Functionally, its primary physiological function is unclear. Has cytoprotective activity against internal or environmental stresses. May play a role in neuronal development and synaptic plasticity. May be required for neuronal myelin sheath maintenance. May play a role in iron uptake and iron homeostasis. Soluble oligomers are toxic to cultured neuroblastoma cells and induce apoptosis (in vitro). Association with GPC1 (via its heparan sulfate chains) targets PRNP to lipid rafts. Also provides Cu(2+) or Zn(2+) for the ascorbate-mediated GPC1 deaminase degradation of its heparan sulfate side chains. The protein is Major prion protein (PRNP) of Ovis aries (Sheep).